The following is a 354-amino-acid chain: uncharacterized protein (354 aa).

The N-terminal stretch at 1 to 21 is a signal peptide; the sequence is MFQKKTYAVFLILLLMMFTAA. The N-palmitoyl cysteine moiety is linked to residue C22. Residue C22 is the site of S-diacylglycerol cysteine attachment.

The protein resides in the cell membrane. Its subcellular location is the membrane raft. This is an uncharacterized protein from Bacillus subtilis (strain 168).